We begin with the raw amino-acid sequence, 365 residues long: Paraneoplastic antigen Ma2 homolog (365 aa).

The residue at position 2 (Ala2) is an N-acetylalanine. Positions 336–365 are disordered; it reads EEEDAYFEQESREEPGEREGSGCWNNSRNN. Basic and acidic residues predominate over residues 344–355; the sequence is QESREEPGEREG.

The protein belongs to the PNMA family. In terms of tissue distribution, expressed in the cerebrum, cerebellum and testis.

It localises to the nucleus. The protein localises to the nucleolus. The chain is Paraneoplastic antigen Ma2 homolog (Pnma2) from Mus musculus (Mouse).